The following is a 605-amino-acid chain: FAD-linked oxidoreductase easE (605 aa).

The signal sequence occupies residues 1 to 20 (MRHFVTFVVGFLLSWGFLSS). N-linked (GlcNAc...) asparagine glycosylation is found at N46 and N105. The region spanning 122 to 307 (CHQGRLPLYS…TQATVRAFPD (186 aa)) is the FAD-binding PCMH-type domain. N370 is a glycosylation site (N-linked (GlcNAc...) asparagine).

The protein belongs to the oxygen-dependent FAD-linked oxidoreductase family. Requires FAD as cofactor.

It functions in the pathway alkaloid biosynthesis; ergot alkaloid biosynthesis. Its function is as follows. FAD-linked oxidoreductase; part of the gene cluster that mediates the biosynthesis of fungal ergot alkaloid ergovaline, the predominant ergopeptine product in E.festucae var. lolii. DmaW catalyzes the first step of ergot alkaloid biosynthesis by condensing dimethylallyl diphosphate (DMAP) and tryptophan to form 4-dimethylallyl-L-tryptophan. The second step is catalyzed by the methyltransferase easF that methylates 4-dimethylallyl-L-tryptophan in the presence of S-adenosyl-L-methionine, resulting in the formation of 4-dimethylallyl-L-abrine. The catalase easC and the FAD-dependent oxidoreductase easE then transform 4-dimethylallyl-L-abrine to chanoclavine-I which is further oxidized by easD in the presence of NAD(+), resulting in the formation of chanoclavine-I aldehyde. Agroclavine dehydrogenase easG then mediates the conversion of chanoclavine-I aldehyde to agroclavine via a non-enzymatic adduct reaction: the substrate is an iminium intermediate that is formed spontaneously from chanoclavine-I aldehyde in the presence of glutathione. The presence of easA is not required to complete this reaction. Further conversion of agroclavine to paspalic acid is a two-step process involving oxidation of agroclavine to elymoclavine and of elymoclavine to paspalic acid, the second step being performed by the elymoclavine oxidase cloA. Paspalic acid is then further converted to D-lysergic acid. Ergovaline is assembled from D-lysergic acid and three different amino acids by the D-lysergyl-peptide-synthetase composed of a monomudular (lpsB) and a trimodular (lpsA) nonribosomal peptide synthetase subunit. The chain is FAD-linked oxidoreductase easE from Epichloe festucae var. lolii (Neotyphodium lolii).